Here is a 235-residue protein sequence, read N- to C-terminus: Transcription factor MYB59 (235 aa).

HTH myb-type domains are found at residues 5-57 and 58-112; these read QEEY…VNYL and HPGL…RKKA. The segment at residues 33 to 57 is a DNA-binding region (H-T-H motif); that stretch reads WDFVAKVSGLNRTGKSCRLRWVNYL. The short motif at 62 to 65 is the Bipartite nuclear localization signal 1 element; it reads KRGK. A DNA-binding region (H-T-H motif) is located at residues 85-108; it reads WSKIARKLPGRTDNEIKNYWRTHM. A Bipartite nuclear localization signal 2 motif is present at residues 109–117; sequence RKKAQEKKR. A disordered region spans residues 109–147; the sequence is RKKAQEKKRPMSPTSSSSNCCSSSMTTTTSQDTGGSNGK. The segment covering 119-138 has biased composition (low complexity); sequence MSPTSSSSNCCSSSMTTTTS.

Mainly expressed in leaves and seedlings, and to a lower extent, in roots, stems and inflorescences. Isoform MYB59-1 and isoform MYB59-2 are present in roots, leaves, and seedlings, while the expression of isoform MYB59-3 and isoform MYB59-4 is confined to seedlings.

The protein resides in the nucleus. Its function is as follows. Transcription factor. The sequence is that of Transcription factor MYB59 (MYB59) from Arabidopsis thaliana (Mouse-ear cress).